The sequence spans 869 residues: Bifunctional uridylyltransferase/uridylyl-removing enzyme (869 aa).

The tract at residues 1-332 is uridylyltransferase; it reads MTATPADRPD…QFDGEAVPVQ (332 aa). Residues 333 to 691 form a uridylyl-removing region; sequence LDAGFSLRRG…RRAVPDNDAL (359 aa). Residues 450–572 form the HD domain; sequence VDQHTLMVLR…VGTRERLDYL (123 aa). 2 ACT domains span residues 692-771 and 798-869; these read EVFV…PSRR and RISL…LDPT.

It belongs to the GlnD family. Requires Mg(2+) as cofactor.

It carries out the reaction [protein-PII]-L-tyrosine + UTP = [protein-PII]-uridylyl-L-tyrosine + diphosphate. The catalysed reaction is [protein-PII]-uridylyl-L-tyrosine + H2O = [protein-PII]-L-tyrosine + UMP + H(+). Uridylyltransferase (UTase) activity is inhibited by glutamine, while glutamine activates uridylyl-removing (UR) activity. Its function is as follows. Modifies, by uridylylation and deuridylylation, the PII regulatory proteins (GlnB and homologs), in response to the nitrogen status of the cell that GlnD senses through the glutamine level. Under low glutamine levels, catalyzes the conversion of the PII proteins and UTP to PII-UMP and PPi, while under higher glutamine levels, GlnD hydrolyzes PII-UMP to PII and UMP (deuridylylation). Thus, controls uridylylation state and activity of the PII proteins, and plays an important role in the regulation of nitrogen assimilation and metabolism. The sequence is that of Bifunctional uridylyltransferase/uridylyl-removing enzyme from Xanthomonas campestris pv. campestris (strain 8004).